The sequence spans 963 residues: Protein suppressor of white apricot (963 aa).

One copy of the SURP motif 1 repeat lies at I234–Y276. Disordered regions lie at residues P290–P322 and E360–Q430. Residues N300–G317 are compositionally biased toward basic and acidic residues. Over residues S364–T375 the composition is skewed to polar residues. Over residues T407–Q418 the composition is skewed to basic and acidic residues. 4 positions are modified to phosphoserine: S438, S447, S448, and S450. Residues N445–V470 form a disordered region. The segment covering Q458–E468 has biased composition (basic and acidic residues). The SURP motif 2 repeat unit spans residues I483–Y523. Disordered regions lie at residues P593–P613, T634–K662, and P716–P963. Residues Q637–Q651 show a composition bias toward polar residues. At S649 the chain carries Phosphoserine. Basic and acidic residues predominate over residues K652 to K662. Low complexity predominate over residues E718–D727. Positions D768 to G778 are enriched in acidic residues. The span at N787–S796 shows a compositional bias: polar residues. Positions V799–A809 are enriched in pro residues. Positions Q820–S830 are enriched in low complexity. The span at S831 to N847 shows a compositional bias: basic residues. Residues V848–R858 show a composition bias toward low complexity. Basic residues-rich tracts occupy residues S861–R870 and K882–R913. Phosphoserine is present on residues S912, S914, and S916. The segment covering A934–R944 has biased composition (basic and acidic residues). The span at T945–P963 shows a compositional bias: basic residues.

It is found in the nucleus speckle. In terms of biological role, regulator of pre-mRNA splicing (and, possibly, of other RNA processing events). Regulates its own expression at the level of RNA processing. This chain is Protein suppressor of white apricot (su(w[a])), found in Drosophila melanogaster (Fruit fly).